The sequence spans 809 residues: Chloride channel protein F (809 aa).

Residues 1–65 (MSTSKYSKMI…SWAKFARLNN (65 aa)) are Cytoplasmic-facing. The next 11 membrane-spanning stretches (helical) occupy residues 66–86 (FYIW…LVAV), 110–130 (LQYL…CFII), 152–172 (FWNP…GLLL), 218–238 (AACC…GVLF), 246–266 (FYLI…AVGI), 295–315 (LIAF…FISL), 333–353 (ITPF…SFPL), 395–415 (GIIL…AVSI), 425–445 (IPLF…MLVL), 459–479 (VVGA…AMII), and 486–506 (LTYM…GNLL). Positions 539-597 (MKRDLYYVCQNTTLSQISNLLKRVDEHSIPVVSSDNDLQLIGTISTTTLEEVIAYHERL) constitute a CBS 1 domain. Disordered stretches follow at residues 604-646 (PLSL…NNQN) and 692-729 (NNNF…NNNS). Residues 620–646 (NDNINNNQNNNNNNNNNNNNNNSNNQN) are compositionally biased toward low complexity. Residues 756-809 (IDSSPFQIQETMPVRKIVFMFMMLGGNILYVTNKGKLTGVVAKTELVHQNNNKH) form the CBS 2 domain.

This sequence belongs to the chloride channel (TC 2.A.49) family.

The protein resides in the membrane. Functionally, voltage-gated chloride channel. Chloride channels may have several functions including the regulation of cell volume, membrane potential stabilization and signal transduction. The sequence is that of Chloride channel protein F (clcF) from Dictyostelium discoideum (Social amoeba).